A 480-amino-acid polypeptide reads, in one-letter code: NADH-quinone oxidoreductase subunit N (480 aa).

13 helical membrane-spanning segments follow: residues 11 to 31, 38 to 58, 74 to 94, 109 to 129, 163 to 183, 200 to 220, 239 to 259, 273 to 293, 301 to 321, 329 to 349, 372 to 392, 405 to 425, and 451 to 471; these read VIPELFVLGMACAILVIDLFV, ITYGLSQFTLIGAAILTIALA, GLSDLLKVAVYLITAVVFLYS, YVLGLFGVLGMMIMISSYSFL, FILGAIASGMLLYGMSILYGI, GAGLNVPLVFALSFVIVGLAF, PTSVTLFIGTAPKLAGLAIIM, WQGMLTILAVLSLAVGNVVAI, MLAYSTISHVGFILMGILAGT, LFYTLVYAIVAAGGFGMIILL, FAFIMLLIMFSMAGVPPTVGF, VEMIWLAIFAVIFSIVGAFYY, and VVLSINGLLVIVLGIFPGLLM.

This sequence belongs to the complex I subunit 2 family. As to quaternary structure, NDH-1 is composed of 14 different subunits. Subunits NuoA, H, J, K, L, M, N constitute the membrane sector of the complex.

It localises to the cell inner membrane. The catalysed reaction is a quinone + NADH + 5 H(+)(in) = a quinol + NAD(+) + 4 H(+)(out). NDH-1 shuttles electrons from NADH, via FMN and iron-sulfur (Fe-S) centers, to quinones in the respiratory chain. The immediate electron acceptor for the enzyme in this species is believed to be ubiquinone. Couples the redox reaction to proton translocation (for every two electrons transferred, four hydrogen ions are translocated across the cytoplasmic membrane), and thus conserves the redox energy in a proton gradient. This chain is NADH-quinone oxidoreductase subunit N, found in Thioalkalivibrio sulfidiphilus (strain HL-EbGR7).